The primary structure comprises 216 residues: uncharacterized protein (216 aa).

An N-terminal signal peptide occupies residues 1-17 (MLKKIIILFLGMFLLSA). The N-palmitoyl cysteine moiety is linked to residue C18. C18 carries S-diacylglycerol cysteine lipidation. Residues 133–162 (SDKEKKIQEELNQIKAMLRETKRDISKYTC) adopt a coiled-coil conformation.

It is found in the cell membrane. This is an uncharacterized protein from Rickettsia conorii (strain ATCC VR-613 / Malish 7).